The primary structure comprises 599 residues: Elongation factor 4 (599 aa).

The 183-residue stretch at lysine 2–glutamate 184 folds into the tr-type G domain. GTP contacts are provided by residues aspartate 14–threonine 19 and asparagine 131–aspartate 134.

Belongs to the TRAFAC class translation factor GTPase superfamily. Classic translation factor GTPase family. LepA subfamily.

Its subcellular location is the cell inner membrane. It catalyses the reaction GTP + H2O = GDP + phosphate + H(+). In terms of biological role, required for accurate and efficient protein synthesis under certain stress conditions. May act as a fidelity factor of the translation reaction, by catalyzing a one-codon backward translocation of tRNAs on improperly translocated ribosomes. Back-translocation proceeds from a post-translocation (POST) complex to a pre-translocation (PRE) complex, thus giving elongation factor G a second chance to translocate the tRNAs correctly. Binds to ribosomes in a GTP-dependent manner. This is Elongation factor 4 from Citrobacter koseri (strain ATCC BAA-895 / CDC 4225-83 / SGSC4696).